The primary structure comprises 607 residues: UvrABC system protein C (607 aa).

A GIY-YIG domain is found at 16–94; sequence HLPGVYRHLD…IKSLRPRYNI (79 aa). Residues 203–238 form the UVR domain; that stretch reads REVMDEIEARMQQASGELRFEEAAVLRDQMGSLSKV.

The protein belongs to the UvrC family. Interacts with UvrB in an incision complex.

Its subcellular location is the cytoplasm. In terms of biological role, the UvrABC repair system catalyzes the recognition and processing of DNA lesions. UvrC both incises the 5' and 3' sides of the lesion. The N-terminal half is responsible for the 3' incision and the C-terminal half is responsible for the 5' incision. The sequence is that of UvrABC system protein C from Bordetella avium (strain 197N).